The following is a 135-amino-acid chain: Small ribosomal subunit protein uS12 (135 aa).

Residue Asp89 is modified to 3-methylthioaspartic acid. The tract at residues 103-135 (DTAGVKNRMQSRSKYGTKRPKPGQAAAPAGKKR) is disordered. The segment covering 111–123 (MQSRSKYGTKRPK) has biased composition (basic residues). Residues 124-135 (PGQAAAPAGKKR) are compositionally biased toward low complexity.

It belongs to the universal ribosomal protein uS12 family. Part of the 30S ribosomal subunit. Contacts proteins S8 and S17. May interact with IF1 in the 30S initiation complex.

With S4 and S5 plays an important role in translational accuracy. Its function is as follows. Interacts with and stabilizes bases of the 16S rRNA that are involved in tRNA selection in the A site and with the mRNA backbone. Located at the interface of the 30S and 50S subunits, it traverses the body of the 30S subunit contacting proteins on the other side and probably holding the rRNA structure together. The combined cluster of proteins S8, S12 and S17 appears to hold together the shoulder and platform of the 30S subunit. This is Small ribosomal subunit protein uS12 from Gloeobacter violaceus (strain ATCC 29082 / PCC 7421).